The primary structure comprises 431 residues: MRALLARLLLCVLVVSDSKGSNELHQVPSNCDCLNGGTCVSNKYFSNIHWCNCPKKFGGQHCEIDKSKTCYEGNGHFYRGKASTDTMGRPCLPWNSATVLQQTYHAHRSDALQLGLGKHNYCRNPDNRRRPWCYVQVGLKLLVQECMVHDCADGKKPSSPPEELKFQCGQKTLRPRFKIIGGEFTTIENQPWFAAIYRRHRGGSVTYVCGGSLISPCWVISATHCFIDYPKKEDYIVYLGRSRLNSNTQGEMKFEVENLILHKDYSADTLAHHNDIALLKIRSKEGRCAQPSRTIQTICLPSMYNDPQFGTSCEITGFGKENSTDYLYPEQLKMTVVKLISHRECQQPHYYGSEVTTKMLCAADPQWKTDSCQGDSGGPLVCSLQGRMTLTGIVSWGRGCALKDKPGVYTRVSHFLPWIRSHTKEENGLAL.

Positions 1 to 20 (MRALLARLLLCVLVVSDSKG) are cleaved as a signal peptide. The 37-residue stretch at 27-63 (VPSNCDCLNGGTCVSNKYFSNIHWCNCPKKFGGQHCE) folds into the EGF-like domain. Intrachain disulfides connect Cys31–Cys39, Cys33–Cys51, Cys53–Cys62, Cys70–Cys151, Cys91–Cys133, and Cys122–Cys146. Residues 34-57 (LNGGTCVSNKYFSNIHWCNCPKKF) are binds urokinase plasminogen activator surface receptor. Residue Thr38 is glycosylated (O-linked (Fuc) threonine). In terms of domain architecture, Kringle spans 70–151 (CYEGNGHFYR…LVQECMVHDC (82 aa)). The tract at residues 152-177 (ADGKKPSSPPEELKFQCGQKTLRPRF) is connecting peptide. At Ser158 the chain carries Phosphoserine. Disulfide bonds link Cys168/Cys299, Cys209/Cys225, Cys217/Cys288, Cys313/Cys382, Cys345/Cys361, and Cys372/Cys400. Positions 179 to 424 (IIGGEFTTIE…FLPWIRSHTK (246 aa)) constitute a Peptidase S1 domain. Catalysis depends on charge relay system residues His224 and Asp275. The N-linked (GlcNAc...) asparagine glycan is linked to Asn322. Ser323 carries the post-translational modification Phosphoserine. Residue Ser376 is the Charge relay system of the active site.

The protein belongs to the peptidase S1 family. As to quaternary structure, found in high and low molecular mass forms. Each consists of two chains, A and B. The high molecular mass form contains a long chain A which is cleaved to yield a short chain A. Forms heterodimer with SERPINA5. Binds LRP1B; binding is followed by internalization and degradation. Interacts with MRC2. Interacts with PLAUR. In complex with SERPINE1, interacts with PLAUR/uPAR. Interacts with SORL1 and LRP1, either alone or in complex with SERPINE1; these interactions are abolished in the presence of LRPAP1/RAP. The ternary complex composed of PLAUR-PLAU-PAI1 also interacts with SORLA. Phosphorylation of Ser-158 and Ser-323 abolishes proadhesive ability but does not interfere with receptor binding. Post-translationally, produced as an inactive single-chain protein (pro-uPA or sc-uPA), is processed into the active disulfide-linked two-chain form of PLAU/uPA by a proteolytic event mediated, at least, by TMPRSS4. As to expression, expressed in the prostate gland and prostate cancers.

It localises to the secreted. The enzyme catalyses Specific cleavage of Arg-|-Val bond in plasminogen to form plasmin.. With respect to regulation, inhibited by SERPINA5. Inhibited by SERPINE1. Functionally, specifically cleaves the zymogen plasminogen to form the active enzyme plasmin. This is Urokinase-type plasminogen activator from Homo sapiens (Human).